A 242-amino-acid chain; its full sequence is Tryptophan synthase alpha chain (242 aa).

Residues E31 and D42 each act as proton acceptor in the active site.

It belongs to the TrpA family. As to quaternary structure, tetramer of two alpha and two beta chains.

It catalyses the reaction (1S,2R)-1-C-(indol-3-yl)glycerol 3-phosphate + L-serine = D-glyceraldehyde 3-phosphate + L-tryptophan + H2O. The protein operates within amino-acid biosynthesis; L-tryptophan biosynthesis; L-tryptophan from chorismate: step 5/5. Functionally, the alpha subunit is responsible for the aldol cleavage of indoleglycerol phosphate to indole and glyceraldehyde 3-phosphate. This is Tryptophan synthase alpha chain from Staphylococcus aureus (strain Mu3 / ATCC 700698).